We begin with the raw amino-acid sequence, 645 residues long: Acetyl-coenzyme A synthetase (645 aa).

Residues 190 to 193 (RGGR) and Thr308 each bind CoA. Residues 384 to 386 (GEP), 408 to 413 (DTWWQT), Asp497, and Arg512 each bind ATP. Residue Ser520 participates in CoA binding. Arg523 contributes to the ATP binding site. The Mg(2+) site is built by Val534, His536, and Val539. Position 606 is an N6-acetyllysine (Lys606).

It belongs to the ATP-dependent AMP-binding enzyme family. Requires Mg(2+) as cofactor. Acetylated. Deacetylation by the SIR2-homolog deacetylase activates the enzyme.

The catalysed reaction is acetate + ATP + CoA = acetyl-CoA + AMP + diphosphate. Functionally, catalyzes the conversion of acetate into acetyl-CoA (AcCoA), an essential intermediate at the junction of anabolic and catabolic pathways. AcsA undergoes a two-step reaction. In the first half reaction, AcsA combines acetate with ATP to form acetyl-adenylate (AcAMP) intermediate. In the second half reaction, it can then transfer the acetyl group from AcAMP to the sulfhydryl group of CoA, forming the product AcCoA. In Alkalilimnicola ehrlichii (strain ATCC BAA-1101 / DSM 17681 / MLHE-1), this protein is Acetyl-coenzyme A synthetase.